Here is a 230-residue protein sequence, read N- to C-terminus: UPF0173 metal-dependent hydrolase MM_2300 (230 aa).

The protein belongs to the UPF0173 family.

The protein is UPF0173 metal-dependent hydrolase MM_2300 of Methanosarcina mazei (strain ATCC BAA-159 / DSM 3647 / Goe1 / Go1 / JCM 11833 / OCM 88) (Methanosarcina frisia).